The primary structure comprises 276 residues: NADPH-dependent 7-cyano-7-deazaguanine reductase (276 aa).

83–85 contributes to the substrate binding site; it reads IES. Position 85-86 (85-86) interacts with NADPH; that stretch reads SK. Cys-184 (thioimide intermediate) is an active-site residue. The active-site Proton donor is Asp-191. Substrate is bound at residue 223–224; the sequence is HE. 252-253 contributes to the NADPH binding site; that stretch reads RG.

This sequence belongs to the GTP cyclohydrolase I family. QueF type 2 subfamily. As to quaternary structure, homodimer.

The protein localises to the cytoplasm. It catalyses the reaction 7-aminomethyl-7-carbaguanine + 2 NADP(+) = 7-cyano-7-deazaguanine + 2 NADPH + 3 H(+). It participates in tRNA modification; tRNA-queuosine biosynthesis. Its function is as follows. Catalyzes the NADPH-dependent reduction of 7-cyano-7-deazaguanine (preQ0) to 7-aminomethyl-7-deazaguanine (preQ1). The polypeptide is NADPH-dependent 7-cyano-7-deazaguanine reductase (Pseudomonas fluorescens (strain Pf0-1)).